We begin with the raw amino-acid sequence, 428 residues long: MAKEKPHVNIVFIGHVDHGKSTTIGRLLFDTANIPEQIIKKFEEMGEKGKSFKFAWVMDRLKEERERGITIDVAHTKFETPHRYITIIDAPGHRDFVKNMITGASQADAAVLIVAATDGVMPQTKEHAFLARTLGINHIIVGVNKMDAVKYDEKRFKEVATQVTKLLQMLGYKNFPVIPISAWEGDNVVKKSDKMPWYNGPTLIEALDQIPEPEKPTDKPLRIPIQDVYSIKGVGTVPVGRVETGVLKVGDVIIFEPASTIFHKPIQGEVKSIEMHHESMPEALPGDNIGFNVRGVGKNDIKRGDVAGHTTNPPTVVRPRDTFKAQIIVLNHPTAITIGYTPVLHAHTTQVAVRFEQLLAKLDPRTGNVVEENPQFIKTGDSAIVVLRPTKPMVIEPVKELPQLGRFAIRDMGQTVAAGMVISIQKGE.

The region spanning 5 to 217 (KPHVNIVFIG…DQIPEPEKPT (213 aa)) is the tr-type G domain. The interval 14–21 (GHVDHGKS) is G1. 14-21 (GHVDHGKS) is a GTP binding site. Ser-21 contacts Mg(2+). A G2 region spans residues 68–72 (GITID). Residues 89-92 (DAPG) are G3. GTP-binding positions include 89 to 93 (DAPGH) and 144 to 147 (NKMD). Residues 144-147 (NKMD) form a G4 region. The G5 stretch occupies residues 181–183 (SAW).

This sequence belongs to the TRAFAC class translation factor GTPase superfamily. Classic translation factor GTPase family. EF-Tu/EF-1A subfamily.

Its subcellular location is the cytoplasm. It catalyses the reaction GTP + H2O = GDP + phosphate + H(+). GTP hydrolase that promotes the GTP-dependent binding of aminoacyl-tRNA to the A-site of ribosomes during protein biosynthesis. The protein is Elongation factor 1-alpha of Thermococcus sibiricus (strain DSM 12597 / MM 739).